We begin with the raw amino-acid sequence, 223 residues long: Ras-related protein RABA4c (223 aa).

22–29 is a binding site for GTP; it reads GDSAVGKS. The Effector region motif lies at 44 to 52; that stretch reads SKATIGVEF. GTP is bound by residues 70-74, 128-131, and 158-159; these read DTAGQ, NKTD, and SA. S-geranylgeranyl cysteine attachment occurs at residues C219 and C220.

Belongs to the small GTPase superfamily. Rab family.

The protein resides in the cell membrane. Intracellular vesicle trafficking and protein transport. The chain is Ras-related protein RABA4c (RABA4C) from Arabidopsis thaliana (Mouse-ear cress).